The chain runs to 646 residues: Alkyl/aryl-sulfatase BDS1 (646 aa).

Met1 is modified (N-acetylmethionine). Zn(2+)-binding residues include His162, His164, Asp166, His167, Glu273, Glu292, and His337.

It belongs to the metallo-beta-lactamase superfamily. Type III sulfatase family. Zn(2+) serves as cofactor.

Alkyl/aryl-sulfatase. Enables the use of SDS and 4-nitrocatechol as sulfur source. This chain is Alkyl/aryl-sulfatase BDS1 (BDS1), found in Saccharomyces cerevisiae (strain ATCC 204508 / S288c) (Baker's yeast).